Consider the following 288-residue polypeptide: Thymidylate synthase (288 aa).

A dUMP-binding site is contributed by arginine 21. Asparagine 51 lines the (6R)-5,10-methylene-5,6,7,8-tetrahydrofolate pocket. 150-151 serves as a coordination point for dUMP; sequence RR. Cysteine 170 acts as the Nucleophile in catalysis. Residues 190–193, asparagine 201, and 231–233 each bind dUMP; these read RSGD and HIY. (6R)-5,10-methylene-5,6,7,8-tetrahydrofolate is bound at residue aspartate 193. Alanine 287 serves as a coordination point for (6R)-5,10-methylene-5,6,7,8-tetrahydrofolate.

This sequence belongs to the thymidylate synthase family. Bacterial-type ThyA subfamily. As to quaternary structure, homodimer.

It is found in the cytoplasm. The catalysed reaction is dUMP + (6R)-5,10-methylene-5,6,7,8-tetrahydrofolate = 7,8-dihydrofolate + dTMP. Its pathway is pyrimidine metabolism; dTTP biosynthesis. Catalyzes the reductive methylation of 2'-deoxyuridine-5'-monophosphate (dUMP) to 2'-deoxythymidine-5'-monophosphate (dTMP) while utilizing 5,10-methylenetetrahydrofolate (mTHF) as the methyl donor and reductant in the reaction, yielding dihydrofolate (DHF) as a by-product. This enzymatic reaction provides an intracellular de novo source of dTMP, an essential precursor for DNA biosynthesis. This chain is Thymidylate synthase, found in Aster yellows witches'-broom phytoplasma (strain AYWB).